A 542-amino-acid chain; its full sequence is GPI alpha-1,2-mannosyltransferase 3 (542 aa).

Positions 1–36 (MESQAADYNPASRNLHGSSGEMKLRRRKSRQYVSAQ) are disordered. Helical transmembrane passes span 52-72 (LVLF…TSFV), 125-145 (VQFL…VADI), 213-233 (LVAL…PLLF), 244-264 (HLTL…SLII), 304-324 (GFPV…FLAP), 327-347 (LHIL…LGHK), 351-371 (FIYP…AHLK), and 376-396 (AALS…GLVH). Asparagine 480 is a glycosylation site (N-linked (GlcNAc...) asparagine).

It belongs to the glycosyltransferase 22 family. PIGB subfamily.

The protein localises to the endoplasmic reticulum membrane. It functions in the pathway glycolipid biosynthesis; glycosylphosphatidylinositol-anchor biosynthesis. Its function is as follows. Alpha-1,2-mannosyltransferase that catalyzes the transfer of the third mannose, via an alpha-1,2 bond, from a dolichol-phosphate-mannose (Dol-P-Man) to an alpha-D-Man-(1-&gt;6)-2-PEtn-alpha-D-Man-(1-&gt;4)-alpha-D-GlcN-(1-&gt;6)-(1-radyl,2-acyl-sn-glycero-3-phospho)-2-acyl-inositol intermediate to generate an alpha-D-Man-(1-&gt;2)-alpha-D-Man-(1-&gt;6)-2-PEtn-alpha-D-Man-(1-&gt;4)-alpha-D-GlcN-(1-&gt;6)-(1-radyl,2-acyl-sn-glycero-3-phospho)-2-acyl-inositol (also termed H6) and participates in the nineth step of the glycosylphosphatidylinositol-anchor biosynthesis. May also add the third mannose to an alpha-D-Man-(1-&gt;6)-alpha-D-Man-(1-&gt;4)-alpha-D-GlcN-(1-&gt;6)-(1-radyl,2-acyl-sn-glycero-3-phospho)-2-acyl-inositol (also termed H3) intermediate generating an alpha-D-Man-(1-&gt;2)-alpha-D-Man-(1-&gt;6)-alpha-D-Man-(1-&gt;4)-alpha-D-GlcN-(1-&gt;6)-(1-radyl,2-acyl-sn-glycero-3-phospho)-2-acyl-inositol (also termed H4). In Mus musculus (Mouse), this protein is GPI alpha-1,2-mannosyltransferase 3.